We begin with the raw amino-acid sequence, 336 residues long: Calcium-gated potassium channel MthK (336 aa).

Over M1–A20 the chain is Cytoplasmic. A helical membrane pass occupies residues T21–I41. The Extracellular portion of the chain corresponds to E42–V48. Residues S49–A58 constitute an intramembrane region (helical; Pore-forming). An intramembrane region (pore-forming) is located at residues T59 to D64. The Selectivity filter motif lies at T59–D64. Over Y65–T69 the chain is Extracellular. A helical transmembrane segment spans residues P70–L95. At E96–L106 the chain is on the cytoplasmic side. An RCK N-terminal domain is found at S115 to S230. Residues D184, E210, and E212 each contribute to the Ca(2+) site. Positions V252 to A336 constitute an RCK C-terminal domain.

In terms of assembly, homotetramer.

Its subcellular location is the cell membrane. In terms of biological role, calcium-gated potassium channel. This chain is Calcium-gated potassium channel MthK (mthK), found in Methanothermobacter thermautotrophicus (strain ATCC 29096 / DSM 1053 / JCM 10044 / NBRC 100330 / Delta H) (Methanobacterium thermoautotrophicum).